The primary structure comprises 437 residues: 3-phosphoshikimate 1-carboxyvinyltransferase (437 aa).

Positions 22, 23, and 27 each coordinate 3-phosphoshikimate. Position 22 (Lys22) interacts with phosphoenolpyruvate. Residues Gly94 and Arg122 each coordinate phosphoenolpyruvate. Ser167, Gln169, Asp314, and Lys341 together coordinate 3-phosphoshikimate. Gln169 lines the phosphoenolpyruvate pocket. Asp314 functions as the Proton acceptor in the catalytic mechanism. 2 residues coordinate phosphoenolpyruvate: Arg345 and Arg389.

The protein belongs to the EPSP synthase family. Monomer.

The protein resides in the cytoplasm. The catalysed reaction is 3-phosphoshikimate + phosphoenolpyruvate = 5-O-(1-carboxyvinyl)-3-phosphoshikimate + phosphate. The protein operates within metabolic intermediate biosynthesis; chorismate biosynthesis; chorismate from D-erythrose 4-phosphate and phosphoenolpyruvate: step 6/7. In terms of biological role, catalyzes the transfer of the enolpyruvyl moiety of phosphoenolpyruvate (PEP) to the 5-hydroxyl of shikimate-3-phosphate (S3P) to produce enolpyruvyl shikimate-3-phosphate and inorganic phosphate. This chain is 3-phosphoshikimate 1-carboxyvinyltransferase, found in Oenococcus oeni (strain ATCC BAA-331 / PSU-1).